The sequence spans 39 residues: Potassium channel toxin alpha-KTx 2.17 (39 aa).

Disulfide bonds link C7-C29, C13-C34, and C17-C36. I39 carries the isoleucine amide modification.

It belongs to the short scorpion toxin superfamily. Potassium channel inhibitor family. Alpha-KTx 02 subfamily. Expressed by the venom gland.

The protein localises to the secreted. Blocks human voltage-gated potassium channels Kv1.1/KCNA1 (IC(50)=4.8 nM) and Kv1.2/KCNA2 (IC(50)=2.9 nM). In Centruroides tecomanus (Scorpion), this protein is Potassium channel toxin alpha-KTx 2.17.